The sequence spans 467 residues: Argininosuccinate lyase (467 aa).

Belongs to the lyase 1 family. Argininosuccinate lyase subfamily.

The protein resides in the cytoplasm. The enzyme catalyses 2-(N(omega)-L-arginino)succinate = fumarate + L-arginine. Its pathway is amino-acid biosynthesis; L-arginine biosynthesis; L-arginine from L-ornithine and carbamoyl phosphate: step 3/3. The chain is Argininosuccinate lyase from Anaeromyxobacter dehalogenans (strain 2CP-C).